The primary structure comprises 504 residues: Porphyrin biosynthesis protein HemD (504 aa).

The tract at residues 1–248 is uroporphyrinogen-III C-methyltransferase; the sequence is MEHGFVALVG…LSEKFSWFMK (248 aa). Positions 249-504 are uroporphyrinogen-III synthase; the sequence is KPLFGTKILV…LEIGGGNIYD (256 aa).

The protein in the N-terminal section; belongs to the precorrin methyltransferase family. It in the C-terminal section; belongs to the uroporphyrinogen-III synthase family.

The enzyme catalyses uroporphyrinogen III + 2 S-adenosyl-L-methionine = precorrin-2 + 2 S-adenosyl-L-homocysteine + H(+). The catalysed reaction is hydroxymethylbilane = uroporphyrinogen III + H2O. The protein operates within cofactor biosynthesis; adenosylcobalamin biosynthesis; precorrin-2 from uroporphyrinogen III: step 1/1. It participates in porphyrin-containing compound metabolism; siroheme biosynthesis; precorrin-2 from uroporphyrinogen III: step 1/1. In terms of biological role, may catalyze sequential reactions to synthesize uroporphyrinogen III from hydroxymethylbilane (HMB) and then precorrin-2, which are intermediate compounds in both vitamin B12 and siroheme biosyntheses. This Ruminiclostridium josui (Clostridium josui) protein is Porphyrin biosynthesis protein HemD (hemD).